Consider the following 1327-residue polypeptide: Kinectin (1327 aa).

The Cytoplasmic portion of the chain corresponds to 1–8 (MELYESTY). Residues 9–29 (FIVLIPSVVITVIFLFFWLFM) traverse the membrane as a helical; Signal-anchor for type II membrane protein segment. Topologically, residues 30 to 1327 (KETLYDEVLA…EVNQQLTKET (1298 aa)) are lumenal. Disordered regions lie at residues 49 to 181 (STKT…EQDK) and 197 to 216 (LSHQ…GLSK). N-linked (GlcNAc...) asparagine glycosylation occurs at Asn-69. Composition is skewed to basic and acidic residues over residues 73–86 (RESD…DFKL) and 111–135 (VRER…ESDA). Phosphoserine occurs at positions 75 and 77. Residues 163–173 (LKKKAGQKKSK) show a composition bias toward basic residues. Residues 329–1327 (ELSGLLHQLQ…EVNQQLTKET (999 aa)) are a coiled coil. Asn-1031 carries an N-linked (GlcNAc...) asparagine glycan. Ser-1060 is modified (phosphoserine). N-linked (GlcNAc...) asparagine glycosylation is present at Asn-1066. At Ser-1290 the chain carries Phosphoserine.

The protein belongs to the kinectin family. In terms of tissue distribution, expressed in all tissues examined including 12-day embryo, adult heart, brain, ovary, kidney, lung, small intestine, spleen, thymus and pancreas.

Its subcellular location is the endoplasmic reticulum membrane. Functionally, receptor for kinesin thus involved in kinesin-driven vesicle motility. Accumulates in integrin-based adhesion complexes (IAC) upon integrin aggregation by fibronectin. This Mus musculus (Mouse) protein is Kinectin.